The chain runs to 120 residues: Large ribosomal subunit protein uL18 (120 aa).

It belongs to the universal ribosomal protein uL18 family. Part of the 50S ribosomal subunit; part of the 5S rRNA/L5/L18/L25 subcomplex. Contacts the 5S and 23S rRNAs.

Its function is as follows. This is one of the proteins that bind and probably mediate the attachment of the 5S RNA into the large ribosomal subunit, where it forms part of the central protuberance. The sequence is that of Large ribosomal subunit protein uL18 from Nitrobacter winogradskyi (strain ATCC 25391 / DSM 10237 / CIP 104748 / NCIMB 11846 / Nb-255).